Reading from the N-terminus, the 74-residue chain is Lambda-hexatoxin-Hv1e (74 aa).

The signal sequence occupies residues 1–22; it reads MNTATCFIVLLVVATVIGGIEA. The propeptide occupies 23–35; it reads GEFDMRKDVMGLF. Disulfide bonds link Cys40-Cys54, Cys47-Cys59, Cys50-Cys51, and Cys53-Cys69.

Belongs to the neurotoxin 11 (kappa toxin) family. In terms of tissue distribution, expressed by the venom gland.

It localises to the secreted. This excitatory toxin inhibits insect calcium-activated potassium (KCa) channels (Slo-type). This Hadronyche versuta (Blue mountains funnel-web spider) protein is Lambda-hexatoxin-Hv1e.